A 341-amino-acid chain; its full sequence is tRNA N6-adenosine threonylcarbamoyltransferase (341 aa).

His111 and His115 together coordinate Fe cation. Substrate contacts are provided by residues 134-138 (LVSGG), Asp167, Gly180, and Asn272. Asp300 serves as a coordination point for Fe cation.

This sequence belongs to the KAE1 / TsaD family. Requires Fe(2+) as cofactor.

Its subcellular location is the cytoplasm. The enzyme catalyses L-threonylcarbamoyladenylate + adenosine(37) in tRNA = N(6)-L-threonylcarbamoyladenosine(37) in tRNA + AMP + H(+). Required for the formation of a threonylcarbamoyl group on adenosine at position 37 (t(6)A37) in tRNAs that read codons beginning with adenine. Is involved in the transfer of the threonylcarbamoyl moiety of threonylcarbamoyl-AMP (TC-AMP) to the N6 group of A37, together with TsaE and TsaB. TsaD likely plays a direct catalytic role in this reaction. This is tRNA N6-adenosine threonylcarbamoyltransferase from Psychromonas ingrahamii (strain DSM 17664 / CCUG 51855 / 37).